Here is a 581-residue protein sequence, read N- to C-terminus: Serine/threonine-protein kinase PINK1, mitochondrial (581 aa).

The N-terminal 77 residues, 1-77 (MAVRQALGRG…RFFRQSVAGL (77 aa)), are a transit peptide targeting the mitochondrion. The Mitochondrial intermembrane segment spans residues 78-93 (AARLQRQFVVRAWGCA). Residues 94-110 (GPCGRAVFLAFGLGLGL) form a helical membrane-spanning segment. The tract at residues 111-117 (IEEKQAE) is required for outer membrane localization. At 111–581 (IEEKQAESRR…LLLCSWRAAL (471 aa)) the chain is on the cytoplasmic side. Positions 156 to 511 (YLIGQSIGKG…VAANVLHLSL (356 aa)) constitute a Protein kinase domain. ATP is bound by residues 162 to 170 (IGKGCSAAV) and lysine 186. Positions 189–208 (GLLPGRGPGTSAPGEGQERA) are disordered. Serine 228 is subject to Phosphoserine; by autocatalysis. Aspartate 362 acts as the Proton acceptor in catalysis. Serine 402 is subject to Phosphoserine; by autocatalysis.

The protein belongs to the protein kinase superfamily. Ser/Thr protein kinase family. In terms of assembly, upon mitochondrial depolarization, it forms a supercomplex with TOM and TIM23 complexes. PINK1-TOM-TIM23 supercomplex formation requires PINK1 interaction with TOMM20 and TOMM70 and is critical for PINK1 stabilization at the outer mitochondrial membrane, kinase activation and downstream mitophagy. Upon mitochondrial depolarization, interacts with TIMM23; the interaction is required for PINK1 accumulation at the outer mitochondrial membrane, kinase activation by autophosphorylation and PRKN recruitement to mitochondria. Interacts with PRKN. Interacts with FBXO7. Forms a complex with PRKN and PARK7. Interacts with NENF. Mg(2+) is required as a cofactor. Post-translationally, proteolytically cleaved. In healthy cells, the precursor is continuously imported into the inner mitochondrial membrane (IMM), where it is proteolytically cleaved by mitochondrial-processing peptidase (MPP) and then undergoes further proteolytic cleavage by PARL or AFG3L2 to give rise to the 52 kDa short form. The 52 kDa short form is then released into the cytosol where it rapidly undergoes proteasome-dependent degradation. In unhealthy cells, when cellular stress conditions lead to the loss of mitochondrial membrane potential, mitochondrial import is impaired leading to the precursor accumulating on the outer mitochondrial membrane (OMM). If accumulation at the OMM fails and it is imported into the depolarized mitochondria, it undergoes cleavage by the IMM protease OMA1, promoting its subsequent degradation by the proteasome. Autophosphorylated. Loss of mitochondrial membrane potential results in the precursor accumulating on the outer mitochondrial membrane (OMM) where it is activated by autophosphorylation. Autophosphorylation at Ser-228 and Ser-402 is sufficient and essential for selective recruitment of PRKN to depolarized mitochondria, via PINK1-dependent phosphorylation of ubiquitin and maybe PRKN. Highly expressed in heart, skeletal muscle and testis, and at lower levels in brain, placenta, liver, kidney, pancreas, prostate, ovary and small intestine. Present in the embryonic testis from an early stage of development.

The protein resides in the mitochondrion outer membrane. The protein localises to the mitochondrion inner membrane. It is found in the cytoplasm. Its subcellular location is the cytosol. It catalyses the reaction L-seryl-[protein] + ATP = O-phospho-L-seryl-[protein] + ADP + H(+). The catalysed reaction is L-threonyl-[protein] + ATP = O-phospho-L-threonyl-[protein] + ADP + H(+). In terms of biological role, serine/threonine-protein kinase which acts as a sensor of mitochondrial damage and protects against mitochondrial dysfunction during cellular stress. It phosphorylates mitochondrial proteins to coordinate mitochondrial quality control mechanisms that remove and replace dysfunctional mitochondrial components. Depending on the severity of mitochondrial damage, activity ranges from preventing apoptosis and stimulating mitochondrial biogenesis to eliminating severely damaged mitochondria via PINK1-PRKN-dependent mitophagy. When cellular stress results in irreversible mitochondrial damage, PINK1 accumulates at the outer mitochondrial membrane (OMM) where it phosphorylates pre-existing polyubiquitin chains at 'Ser-65', recruits PRKN from the cytosol to the OMM and activates PRKN by phosphorylation at 'Ser-65'; activated PRKN then ubiquinates VDAC1 and other OMM proteins to initiate mitophagy. The PINK1-PRKN pathway also promotes fission of damaged mitochondria through phosphorylation and PRKN-dependent degradation of mitochondrial proteins involved in fission such as MFN2. This prevents the refusion of unhealthy mitochondria with the mitochondrial network or initiates mitochondrial fragmentation facilitating their later engulfment by autophagosomes. Also promotes mitochondrial fission independently of PRKN and ATG7-mediated mitophagy, via the phosphorylation and activation of DNM1L. Regulates motility of damaged mitochondria by promoting the ubiquitination and subsequent degradation of MIRO1 and MIRO2; in motor neurons, this likely inhibits mitochondrial intracellular anterograde transport along the axons which probably increases the chance of the mitochondria undergoing mitophagy in the soma. Required for ubiquinone reduction by mitochondrial complex I by mediating phosphorylation of complex I subunit NDUFA10. Phosphorylates LETM1, positively regulating its mitochondrial calcium transport activity. The polypeptide is Serine/threonine-protein kinase PINK1, mitochondrial (PINK1) (Homo sapiens (Human)).